The chain runs to 110 residues: Transcription factor S (110 aa).

Residues Cys-4, Cys-7, Cys-22, Cys-25, Cys-71, Cys-74, Cys-99, and Cys-102 each contribute to the Zn(2+) site. Residues Thr-67 to Arg-107 form a TFIIS-type zinc finger.

It belongs to the archaeal rpoM/eukaryotic RPA12/RPB9/RPC11 RNA polymerase family.

It is found in the chromosome. Its function is as follows. Involved in transcriptional proofreading and fidelity. Induces RNA cleavage activity in RNA polymerase (RNAP). Stimulates transcription elongation by RNAP on both naked DNA and histone-bound DNA (chromatin), facilitating transcription through the histone barrier. Stimulation depends on transcript cleavage. In the presence of TFS, the cleavage activity of RNAP truncates RNA back to position +15 in a stepwise manner by releasing mainly dinucleotides from the 3'-end of the nascent RNA. The truncated RNAs are able to continue elongation. Misincorporation of nucleotides during elongation of transcription leads to arrested elongation complexes which are rescued by TFS-promoted removal of a dinucleotide from the 3'-end. TFS is able to induce a cleavage resynthesis cycle in stalled elongation complexes (resulting from the next missing nucleotide or a reduced incorporation rate of a wrong nucleotide) preventing misincorporation and enabling proofreading in a post-incorporation manner. Pausing of elongation complexes is the main determinant of TFS-induced RNA cleavage. In Thermococcus kodakarensis (strain ATCC BAA-918 / JCM 12380 / KOD1) (Pyrococcus kodakaraensis (strain KOD1)), this protein is Transcription factor S.